Reading from the N-terminus, the 222-residue chain is N-(5'-phosphoribosyl)anthranilate isomerase (222 aa).

Belongs to the TrpF family.

It catalyses the reaction N-(5-phospho-beta-D-ribosyl)anthranilate = 1-(2-carboxyphenylamino)-1-deoxy-D-ribulose 5-phosphate. It participates in amino-acid biosynthesis; L-tryptophan biosynthesis; L-tryptophan from chorismate: step 3/5. The sequence is that of N-(5'-phosphoribosyl)anthranilate isomerase from Gloeobacter violaceus (strain ATCC 29082 / PCC 7421).